A 210-amino-acid polypeptide reads, in one-letter code: dTTP/UTP pyrophosphatase (210 aa).

The active-site Proton acceptor is aspartate 89.

This sequence belongs to the Maf family. YhdE subfamily. Requires a divalent metal cation as cofactor.

Its subcellular location is the cytoplasm. It carries out the reaction dTTP + H2O = dTMP + diphosphate + H(+). It catalyses the reaction UTP + H2O = UMP + diphosphate + H(+). In terms of biological role, nucleoside triphosphate pyrophosphatase that hydrolyzes dTTP and UTP. May have a dual role in cell division arrest and in preventing the incorporation of modified nucleotides into cellular nucleic acids. The chain is dTTP/UTP pyrophosphatase from Burkholderia orbicola (strain AU 1054).